The primary structure comprises 357 residues: Fructose-bisphosphate aldolase (357 aa).

Residues arginine 49 and lysine 140 each contribute to the substrate site. The Proton acceptor role is filled by glutamate 183. Lysine 225 functions as the Schiff-base intermediate with dihydroxyacetone-P in the catalytic mechanism.

This sequence belongs to the class I fructose-bisphosphate aldolase family.

It carries out the reaction beta-D-fructose 1,6-bisphosphate = D-glyceraldehyde 3-phosphate + dihydroxyacetone phosphate. The protein operates within carbohydrate degradation; glycolysis; D-glyceraldehyde 3-phosphate and glycerone phosphate from D-glucose: step 4/4. The chain is Fructose-bisphosphate aldolase (fba) from Dictyostelium discoideum (Social amoeba).